Here is a 417-residue protein sequence, read N- to C-terminus: Aromatic-amino-acid aminotransferase 1 (417 aa).

Lys258 carries the post-translational modification N6-(pyridoxal phosphate)lysine.

The protein belongs to the class-I pyridoxal-phosphate-dependent aminotransferase family. In terms of assembly, homodimer. The cofactor is pyridoxal 5'-phosphate.

The catalysed reaction is an aromatic L-alpha-amino acid + 2-oxoglutarate = an aromatic oxo-acid + L-glutamate. Catalyzes the transamination of phenylalanine, tyrosine and tryptophan. Shows virtually no activity towards aspartic acid, alanine, valine or isoleucine. The protein is Aromatic-amino-acid aminotransferase 1 of Thermococcus litoralis (strain ATCC 51850 / DSM 5473 / JCM 8560 / NS-C).